We begin with the raw amino-acid sequence, 507 residues long: Rhamnogalacturonase A (507 aa).

Positions 1–21 (MYVSRLLLFLAPLLVKGQLSG) are cleaved as a signal peptide. A disulfide bond links Cys38 and Cys64. The active-site Proton donor is Asp215. Residues Cys217 and Cys234 are joined by a disulfide bond. The N-linked (GlcNAc...) asparagine glycan is linked to Asn235. His290 is a catalytic residue. Asn317 is a glycosylation site (N-linked (GlcNAc...) asparagine). 2 cysteine pairs are disulfide-bonded: Cys340–Cys346 and Cys368–Cys377. The segment covering 462–491 (SPATSSPTATSTAISSVDPVSAATTTATSH) has biased composition (low complexity). Positions 462-507 (SPATSSPTATSTAISSVDPVSAATTTATSHGHGKSHHKHQCRAHRH) are disordered. Positions 492–507 (GHGKSHHKHQCRAHRH) are enriched in basic residues.

This sequence belongs to the glycosyl hydrolase 28 family.

It localises to the secreted. The enzyme catalyses Endohydrolysis of alpha-D-GalA-(1-&gt;2)-alpha-L-Rha glycosidic bond in the rhamnogalacturonan I backbone with initial inversion of anomeric configuration releasing oligosaccharides with beta-D-GalA at the reducing end.. Pectinolytic enzymes consist of four classes of enzymes: pectine lyase, polygalacturonase, pectin methylesterase and rhamnogalacturonase. Hydrolyzes alpha-D-galacturonopyranosyl-(1,2)-alpha-L-rhamnopyranosyl linkages in the backbone of the hairy regions of pectins. Active against linseed rhamnogalacturonan. In Emericella nidulans (strain FGSC A4 / ATCC 38163 / CBS 112.46 / NRRL 194 / M139) (Aspergillus nidulans), this protein is Rhamnogalacturonase A (rhgA).